Here is a 196-residue protein sequence, read N- to C-terminus: dITP/XTP pyrophosphatase (196 aa).

9–14 (TSNAGK) contacts substrate. Mg(2+) contacts are provided by Glu39 and Asp68. The active-site Proton acceptor is Asp68. Residues Ser69, 147–150 (FGYD), Lys170, and 175–176 (HR) each bind substrate.

It belongs to the HAM1 NTPase family. As to quaternary structure, homodimer. Mg(2+) is required as a cofactor.

It catalyses the reaction XTP + H2O = XMP + diphosphate + H(+). The catalysed reaction is dITP + H2O = dIMP + diphosphate + H(+). It carries out the reaction ITP + H2O = IMP + diphosphate + H(+). Pyrophosphatase that catalyzes the hydrolysis of nucleoside triphosphates to their monophosphate derivatives, with a high preference for the non-canonical purine nucleotides XTP (xanthosine triphosphate), dITP (deoxyinosine triphosphate) and ITP. Seems to function as a house-cleaning enzyme that removes non-canonical purine nucleotides from the nucleotide pool, thus preventing their incorporation into DNA/RNA and avoiding chromosomal lesions. In Nostoc sp. (strain PCC 7120 / SAG 25.82 / UTEX 2576), this protein is dITP/XTP pyrophosphatase.